A 155-amino-acid polypeptide reads, in one-letter code: S-ribosylhomocysteine lyase (155 aa).

Residues His-54, His-58, and Cys-122 each contribute to the Fe cation site.

The protein belongs to the LuxS family. As to quaternary structure, homodimer. Fe cation serves as cofactor.

It catalyses the reaction S-(5-deoxy-D-ribos-5-yl)-L-homocysteine = (S)-4,5-dihydroxypentane-2,3-dione + L-homocysteine. Its function is as follows. Involved in the synthesis of autoinducer 2 (AI-2) which is secreted by bacteria and is used to communicate both the cell density and the metabolic potential of the environment. The regulation of gene expression in response to changes in cell density is called quorum sensing. Catalyzes the transformation of S-ribosylhomocysteine (RHC) to homocysteine (HC) and 4,5-dihydroxy-2,3-pentadione (DPD). The polypeptide is S-ribosylhomocysteine lyase (Deinococcus deserti (strain DSM 17065 / CIP 109153 / LMG 22923 / VCD115)).